Consider the following 226-residue polypeptide: Ribose-5-phosphate isomerase A (226 aa).

Substrate is bound by residues 25-28 (TGST), 81-84 (DGAD), and 94-97 (KGGG). Catalysis depends on Glu-103, which acts as the Proton acceptor. Lys-121 lines the substrate pocket.

The protein belongs to the ribose 5-phosphate isomerase family. Homodimer.

The catalysed reaction is aldehydo-D-ribose 5-phosphate = D-ribulose 5-phosphate. The protein operates within carbohydrate degradation; pentose phosphate pathway; D-ribose 5-phosphate from D-ribulose 5-phosphate (non-oxidative stage): step 1/1. In terms of biological role, catalyzes the reversible conversion of ribose-5-phosphate to ribulose 5-phosphate. This is Ribose-5-phosphate isomerase A from Enterococcus faecalis (strain ATCC 700802 / V583).